Here is a 539-residue protein sequence, read N- to C-terminus: Beta-agarase A (539 aa).

An N-terminal signal peptide occupies residues 1-19 (MKKNYLLLYFIFLLCGSIA). In terms of domain architecture, GH16 spans 21-289 (QDWNGIPVPA…WIRVYKPVAV (269 aa)). Substrate is bound by residues Trp73, 82 to 92 (NAPQAWTNGSQ), 96 to 98 (QAQ), and Glu144. The Nucleophile role is filled by Glu147. Residue Glu152 is the Proton donor of the active site. Substrate is bound by residues Arg176 and Asp271. The tract at residues 332 to 353 (WANTNDIGSRDRGASNGRNNIN) is disordered.

Belongs to the glycosyl hydrolase 16 family. In terms of assembly, monomer. Proteolytically cleaved into mature beta-agarase A catalytic chain (AgaAc).

It localises to the secreted. The catalysed reaction is Hydrolysis of (1-&gt;4)-beta-D-galactosidic linkages in agarose, giving the tetramer as the predominant product.. Its function is as follows. Cleaves the beta-1,4-linkages between beta-D-galactose and alpha-L-3,6-anhydro-galactose residues in agarose. Cleaves agarose in a random manner with retention of the anomeric-bond configuration, producing beta-anomers that give rise progressively to alpha-anomers when mutarotation takes place. The polypeptide is Beta-agarase A (agaA) (Zobellia galactanivorans (strain DSM 12802 / CCUG 47099 / CIP 106680 / NCIMB 13871 / Dsij)).